Consider the following 518-residue polypeptide: Probable inorganic carbon transporter subunit DabB (518 aa).

A run of 13 helical transmembrane segments spans residues 3-23 (MQWV…LGSL), 37-57 (ISLL…FEWV), 65-85 (WVGV…IAFV), 114-134 (CVVT…WIAI), 165-185 (AEAC…TWFI), 207-227 (MLLA…GWLI), 242-262 (AGII…IVLS), 264-284 (MAQW…ALVM), 302-322 (MGLM…LHLV), 358-378 (WWFA…LADL), 379-399 (SGPY…IAER), 403-423 (LTSS…VVYT), and 442-462 (WKGD…YFLL).

It belongs to the inorganic carbon transporter (TC 9.A.2) DabB family. As to quaternary structure, forms a complex with DabA.

The protein resides in the cell inner membrane. Intracellular DIC accumulation is sensitive to CCCP (carbonyl cyanide-m-chlorophenylhydrazone) and DCCD (N,N-dicyclohexylcarbodiimide) and therefore likely driven by either proton gradient, ATP, or both. Part of an energy-coupled inorganic carbon pump involved in transport of dissolved inorganic carbon (DIC) with downstream gene dabA (Tcr_0854); has been suggested to be a proton-DIC symporter. The sequence is that of Probable inorganic carbon transporter subunit DabB from Hydrogenovibrio crunogenus (strain DSM 25203 / XCL-2) (Thiomicrospira crunogena).